The chain runs to 214 residues: DNA-binding protein HupB (214 aa).

The residue at position 3 (K3) is an N6-acetyllysine. The residue at position 3 (K3) is an N6-succinyllysine. A phosphothreonine mark is found at T43 and T45. Residues K72, K86, and K103 each carry the N6-acetyllysine modification. Positions 100-214 (PAVKRGVGAS…KKATARRGRK (115 aa)) are disordered. Residues 102–112 (VKRGVGASAAK) show a composition bias toward low complexity. An N6-succinyllysine modification is found at K113. Positions 113–214 (KVAKKAPAKK…KKATARRGRK (102 aa)) are enriched in basic residues. N6-acetyllysine is present on residues K116 and K133. K142 bears the N6-succinyllysine mark. N6-acetyllysine occurs at positions 146 and 167.

The protein belongs to the bacterial histone-like protein family. Long actinobacterial subfamily. As to quaternary structure, oligomerizes. Homodimer; the crystallized protein is missing the C-terminal 105 residues. Interacts with topoisomerase 1 (topA). Interacts with Eis. Interacts with NAD-dependent protein deacylase NPD (MRA_1161). Interacts with MRA_0812 CoA transferase. In terms of processing, phosphorylated in vivo on Ser and Thr-residues; the protein is degraded during purification so most sites were not identified, but at least one of Thr-43 and/or Thr-45 are modified in vivo. In vitro at least PknE, PknF and PknB phosphorylate HupB; PknE is the most active and phosphorylates many sites in vitro including Thr-43 and Thr-45. Acetylated on 8 Lys residues in vivo (probably by Eis). In vitro acetylated by Eis on 28 residues (strains H37Rv and H37Ra), many more than those identified in vivo. Also acetylated by MRA_0812. Deacetylated in vitro by NAD-dependent protein deacylase NPD (MRA_1161). Post-translationally, succinylated in vivo and in vitro by MRA_0812 and by Eis; only 3 residues are found to be succinylated in vivo, while 27 are modifed in vitro by MRA_0812 and 32 are succinylated by Eis. NAD-dependent protein deacylase (MRA_1161) desuccinylates this protein.

The protein localises to the cytoplasm. Its subcellular location is the nucleoid. The enzyme catalyses 4 Fe(2+) + O2 + 4 H(+) = 4 Fe(3+) + 2 H2O. With respect to regulation, two trans-stilbene derivatives, 4,4'-[(E)-ethene-1,2 diylbis({5[(phenylcarbonyl)amino]benzene-2,1-diyl}sulfonylimino)] dibenzoic acid and its methoxy derivative 4,4'-[1,2-ethenediylbis({5-[(4-methoxybenzoyl)amino]-2,1phenylene}sulfonylimino)] dibenzoic acid, respectively SD1 and SD4, inhibit DNA binding with 50% inhibition at 20 uM for SD1 and 1.7 uM for SD4. SD1 and SD4 have minimal inhibitory concentrations of 400 and 800 uM on strain H37Ra respectively. In terms of biological role, a nucleoid-associated protein (NAP) that plays a role in local chromosome architecture. Binds DNA non-sequence specifically; in vitro phosphorylation of an N-terminal fragment decreases DNA-binding. Stimulates supercoiling relaxation by topoisomerase 1 (Top1, topA), at higher than 80 uM inhibits relaxation, has no effect on DNA gyrase; the effect is independent of DNA-binding. Increases the intervening strand passage activity of Top1 that occurs between the two catalytic trans-esterification reactions. Does not bind ssDNA, probably helps condense chromosomes. Binds dsDNA; in vitro acetylated protein binds 10-fold less well to DNA (note in vitro acetylated protein is more heavily modified than in vivo modified protein). In vitro acetylated protein compacts DNA less well than unmodified protein. In vitro succinylated DNA bind dsDNA less well than unmodified protein (note in vitro succinylated protein is more heavily modified than in vivo modified protein). Its function is as follows. Has ferroxidase activity, converts Fe(2+) into Fe(3+). Binds Fe(3+) but not Fe(2+); prevents the generation of hydroxyl radicals by the Fenton reaction and thus protects DNA from damage. May function in iron storage. Required for biofilm formation; trimethylation by recombinant human SUV39H1 (a histone methyltransferase) inhibits biofilm formation. Probably influences transcription. RNase E and HupB jointly contribute to cellular adaptation to changing growth conditions and survival during antibiotic treatment and in the host. The protein is DNA-binding protein HupB of Mycobacterium tuberculosis (strain ATCC 25177 / H37Ra).